Consider the following 140-residue polypeptide: Nucleoside diphosphate kinase (140 aa).

Positions 11, 59, 87, 93, 104, and 114 each coordinate ATP. The Pros-phosphohistidine intermediate role is filled by His117.

It belongs to the NDK family. As to quaternary structure, homotetramer. Mg(2+) is required as a cofactor.

It is found in the cytoplasm. It catalyses the reaction a 2'-deoxyribonucleoside 5'-diphosphate + ATP = a 2'-deoxyribonucleoside 5'-triphosphate + ADP. The catalysed reaction is a ribonucleoside 5'-diphosphate + ATP = a ribonucleoside 5'-triphosphate + ADP. Major role in the synthesis of nucleoside triphosphates other than ATP. The ATP gamma phosphate is transferred to the NDP beta phosphate via a ping-pong mechanism, using a phosphorylated active-site intermediate. In Cereibacter sphaeroides (strain ATCC 17025 / ATH 2.4.3) (Rhodobacter sphaeroides), this protein is Nucleoside diphosphate kinase.